A 357-amino-acid chain; its full sequence is Phosphoserine aminotransferase (357 aa).

An L-glutamate-binding site is contributed by R41. Pyridoxal 5'-phosphate-binding positions include 76-77 (GT), W102, T152, D171, and Q194. K195 bears the N6-(pyridoxal phosphate)lysine mark. 235 to 236 (NT) is a pyridoxal 5'-phosphate binding site.

The protein belongs to the class-V pyridoxal-phosphate-dependent aminotransferase family. SerC subfamily. As to quaternary structure, homodimer. Pyridoxal 5'-phosphate serves as cofactor.

The protein localises to the cytoplasm. It carries out the reaction O-phospho-L-serine + 2-oxoglutarate = 3-phosphooxypyruvate + L-glutamate. The enzyme catalyses 4-(phosphooxy)-L-threonine + 2-oxoglutarate = (R)-3-hydroxy-2-oxo-4-phosphooxybutanoate + L-glutamate. It functions in the pathway amino-acid biosynthesis; L-serine biosynthesis; L-serine from 3-phospho-D-glycerate: step 2/3. Its function is as follows. Catalyzes the reversible conversion of 3-phosphohydroxypyruvate to phosphoserine and of 3-hydroxy-2-oxo-4-phosphonooxybutanoate to phosphohydroxythreonine. The protein is Phosphoserine aminotransferase of Limosilactobacillus fermentum (strain NBRC 3956 / LMG 18251) (Lactobacillus fermentum).